The primary structure comprises 477 residues: Chaperonin GroEL 2 (477 aa).

Residues 29 to 32 (TLGP), 86 to 90 (DGTTT), and Gly-416 contribute to the ATP site.

Belongs to the chaperonin (HSP60) family. Forms a cylinder of 14 subunits composed of two heptameric rings stacked back-to-back. Interacts with the co-chaperonin GroES.

The protein resides in the cytoplasm. It catalyses the reaction ATP + H2O + a folded polypeptide = ADP + phosphate + an unfolded polypeptide.. Functionally, together with its co-chaperonin GroES, plays an essential role in assisting protein folding. The GroEL-GroES system forms a nano-cage that allows encapsulation of the non-native substrate proteins and provides a physical environment optimized to promote and accelerate protein folding. This chain is Chaperonin GroEL 2, found in Streptomyces lividans.